A 117-amino-acid chain; its full sequence is Large ribosomal subunit protein bL20 (117 aa).

Belongs to the bacterial ribosomal protein bL20 family.

Binds directly to 23S ribosomal RNA and is necessary for the in vitro assembly process of the 50S ribosomal subunit. It is not involved in the protein synthesizing functions of that subunit. This chain is Large ribosomal subunit protein bL20, found in Symbiobacterium thermophilum (strain DSM 24528 / JCM 14929 / IAM 14863 / T).